The chain runs to 207 residues: Ribosomal RNA small subunit methyltransferase G (207 aa).

S-adenosyl-L-methionine-binding positions include G75, M80, V126 to E127, and R141.

This sequence belongs to the methyltransferase superfamily. RNA methyltransferase RsmG family.

It localises to the cytoplasm. The enzyme catalyses guanosine(527) in 16S rRNA + S-adenosyl-L-methionine = N(7)-methylguanosine(527) in 16S rRNA + S-adenosyl-L-homocysteine. Its function is as follows. Specifically methylates the N7 position of guanine in position 527 of 16S rRNA. The protein is Ribosomal RNA small subunit methyltransferase G of Laribacter hongkongensis (strain HLHK9).